A 263-amino-acid polypeptide reads, in one-letter code: Acetylglutamate kinase (263 aa).

Substrate-binding positions include Gly-48 to Gly-49, Arg-70, and Asn-162.

This sequence belongs to the acetylglutamate kinase family. ArgB subfamily.

The protein localises to the cytoplasm. The catalysed reaction is N-acetyl-L-glutamate + ATP = N-acetyl-L-glutamyl 5-phosphate + ADP. It functions in the pathway amino-acid biosynthesis; L-arginine biosynthesis; N(2)-acetyl-L-ornithine from L-glutamate: step 2/4. In terms of biological role, catalyzes the ATP-dependent phosphorylation of N-acetyl-L-glutamate. This chain is Acetylglutamate kinase, found in Shewanella sediminis (strain HAW-EB3).